The following is a 108-amino-acid chain: Class I hydrophobin 3 (108 aa).

The first 17 residues, 1-17 (MFSRVFAVASLAALALA), serve as a signal peptide directing secretion. Intrachain disulfides connect cysteine 26–cysteine 87, cysteine 33–cysteine 81, cysteine 34–cysteine 67, and cysteine 88–cysteine 101.

It belongs to the fungal hydrophobin family. Self-assembles to form functional amyloid fibrils called rodlets. Self-assembly into fibrillar rodlets occurs spontaneously at hydrophobic:hydrophilic interfaces and the rodlets further associate laterally to form amphipathic monolayers.

It localises to the secreted. The protein resides in the cell wall. In terms of biological role, aerial growth, conidiation, and dispersal of filamentous fungi in the environment rely upon a capability of their secreting small amphipathic proteins called hydrophobins (HPBs) with low sequence identity. Class I can self-assemble into an outermost layer of rodlet bundles on aerial cell surfaces, conferring cellular hydrophobicity that supports fungal growth, development and dispersal; whereas Class II form highly ordered films at water-air interfaces through intermolecular interactions but contribute nothing to the rodlet structure. This is Class I hydrophobin 3 from Pisolithus tinctorius (Dead man's foot).